Here is an 884-residue protein sequence, read N- to C-terminus: Microsomal triglyceride transfer protein large subunit (884 aa).

The N-terminal stretch at 1–21 is a signal peptide; sequence MMPVAGLLLCVTAVLCTSALG. The Vitellogenin domain maps to 26-660; it reads LDNGKLYRYS…QSNNALLHGL (635 aa). A disulfide bond links Cys172 and Cys192. An N-linked (GlcNAc...) asparagine glycan is attached at Asn348. The cysteines at positions 438 and 443 are disulfide-linked. Asn787 carries an N-linked (GlcNAc...) asparagine glycan.

As to quaternary structure, heterodimer; heterodimerizes with the protein disulfide isomerase. Highest expression in the proximal part of the anterior intestine. Lower expression in the distal part of the anterior intestine, in the posterior portion of the intestinal tube and liver. Very low expression levels in heart, brain, ovary, testis and kidney.

It is found in the endoplasmic reticulum. Its subcellular location is the golgi apparatus. It catalyses the reaction a 1,2-diacyl-sn-glycero-3-phosphocholine(in) = a 1,2-diacyl-sn-glycero-3-phosphocholine(out). The enzyme catalyses a 1,2-diacyl-sn-glycero-3-phosphoethanolamine(in) = a 1,2-diacyl-sn-glycero-3-phosphoethanolamine(out). It carries out the reaction a cholesterol ester(in) = a cholesterol ester(out). The catalysed reaction is a triacyl-sn-glycerol(in) = a triacyl-sn-glycerol(out). Its activity is regulated as follows. Inhibited by naringenin. Catalyzes the transport of triglyceride between phospholipid surfaces. Catalyzes the transport of cholesteryl ester, and phospholipid between phospholipid surfaces. Required for the assembly and secretion of plasma lipoproteins that contain apolipoprotein B. Required for yolk lipid utilization and absorption of dietary lipids in larvae. The sequence is that of Microsomal triglyceride transfer protein large subunit from Danio rerio (Zebrafish).